The sequence spans 1226 residues: Methionine synthase (1226 aa).

A Hcy-binding domain is found at 6 to 326 (RQQIEAQLKQ…EHIRQMAQAV (321 aa)). The Zn(2+) site is built by C248, C311, and C312. The Pterin-binding domain maps to 357-618 (FINVGERTNV…VPEKLREAVE (262 aa)). Residues 651–745 (SALEWRTWPV…FINAEKQSGS (95 aa)) form the B12-binding N-terminal domain. Residues E695, 757–761 (GDVHD), H760, S805, T809, and A861 each bind methylcob(III)alamin. The B12-binding domain maps to 747–882 (NGKILLATVK…SDERRPAFIE (136 aa)). The region spanning 898 to 1226 (KKPRTKPVTL…EKWLGPNING (329 aa)) is the AdoMet activation domain. Residues D948, R1136, and 1191 to 1192 (YF) contribute to the S-adenosyl-L-methionine site.

The protein belongs to the vitamin-B12 dependent methionine synthase family. The cofactor is methylcob(III)alamin. It depends on Zn(2+) as a cofactor.

It catalyses the reaction (6S)-5-methyl-5,6,7,8-tetrahydrofolate + L-homocysteine = (6S)-5,6,7,8-tetrahydrofolate + L-methionine. It participates in amino-acid biosynthesis; L-methionine biosynthesis via de novo pathway; L-methionine from L-homocysteine (MetH route): step 1/1. In terms of biological role, catalyzes the transfer of a methyl group from methyl-cobalamin to homocysteine, yielding enzyme-bound cob(I)alamin and methionine. Subsequently, remethylates the cofactor using methyltetrahydrofolate. The chain is Methionine synthase (metH) from Vibrio parahaemolyticus serotype O3:K6 (strain RIMD 2210633).